The chain runs to 58 residues: Small ribosomal subunit protein bS21 (58 aa).

The disordered stretch occupies residues 31–58; it reads DLKRIRHHETPVEKYKRKAQQRRRSRRR. Residues 45–58 show a composition bias toward basic residues; the sequence is YKRKAQQRRRSRRR.

This sequence belongs to the bacterial ribosomal protein bS21 family.

The sequence is that of Small ribosomal subunit protein bS21 from Prochlorococcus marinus (strain MIT 9303).